The sequence spans 422 residues: MAM and fibronectin type III domain-containing protein 1 (422 aa).

One can recognise an MAM domain in the interval 1 to 75; sequence KFYYHMYGAT…VSLMEGICAG (75 aa). Fibronectin type-III domains lie at 2–74, 196–286, and 291–386; these read FYYH…GICA, PGWN…QART, and PSRA…YIVT.

As to expression, component of the acid-insoluble and acid-soluble organic matrix of the aragonitic skeleton (at protein level).

It localises to the secreted. The polypeptide is MAM and fibronectin type III domain-containing protein 1 (Acropora millepora (Staghorn coral)).